The chain runs to 350 residues: S-adenosylmethionine:tRNA ribosyltransferase-isomerase (350 aa).

It belongs to the QueA family. Monomer.

It localises to the cytoplasm. The catalysed reaction is 7-aminomethyl-7-carbaguanosine(34) in tRNA + S-adenosyl-L-methionine = epoxyqueuosine(34) in tRNA + adenine + L-methionine + 2 H(+). The protein operates within tRNA modification; tRNA-queuosine biosynthesis. Functionally, transfers and isomerizes the ribose moiety from AdoMet to the 7-aminomethyl group of 7-deazaguanine (preQ1-tRNA) to give epoxyqueuosine (oQ-tRNA). This Vibrio vulnificus (strain YJ016) protein is S-adenosylmethionine:tRNA ribosyltransferase-isomerase.